We begin with the raw amino-acid sequence, 652 residues long: Type III restriction-modification enzyme StyLTI Mod subunit (652 aa).

Residues 135-138 (DPPY) are binding of S-adenosyl methionine.

The protein belongs to the N(4)/N(6)-methyltransferase family. Homodimer, also forms a functional restriction-competent complex with Res.

It carries out the reaction a 2'-deoxyadenosine in DNA + S-adenosyl-L-methionine = an N(6)-methyl-2'-deoxyadenosine in DNA + S-adenosyl-L-homocysteine + H(+). A beta subtype methylase that binds the system-specific DNA recognition site 5'-CAGAG-3' and methylates A-4 (of only 1 strand as the other does not have an A residue). DNA restriction requires both the Res and Mod subunits. The sequence is that of Type III restriction-modification enzyme StyLTI Mod subunit from Salmonella typhimurium (strain LT2 / SGSC1412 / ATCC 700720).